Consider the following 99-residue polypeptide: Large ribosomal subunit protein uL23 (99 aa).

Belongs to the universal ribosomal protein uL23 family. As to quaternary structure, part of the 50S ribosomal subunit. Contacts protein L29, and trigger factor when it is bound to the ribosome.

One of the early assembly proteins it binds 23S rRNA. One of the proteins that surrounds the polypeptide exit tunnel on the outside of the ribosome. Forms the main docking site for trigger factor binding to the ribosome. The chain is Large ribosomal subunit protein uL23 from Pseudomonas entomophila (strain L48).